The primary structure comprises 87 residues: Keratin-associated protein 19-1 (87 aa).

A 21 X 2 AA repeats of G-[YCGS] region spans residues 6-72 (GYSGGLGYGY…SSYGGYGCGC (67 aa)).

Belongs to the KRTAP type 19 family. As to quaternary structure, interacts with hair keratins. In terms of tissue distribution, strong expression in narrowly defined pattern restricted to the lower and middle cortical regions of the hair shaft in both developing and cycling hair. During hair follicle regression (catagen), expression levels decrease until expression is no longer detectable in follicles at resting stage (telogen).

Its function is as follows. In the hair cortex, hair keratin intermediate filaments are embedded in an interfilamentous matrix, consisting of hair keratin-associated proteins (KRTAP), which are essential for the formation of a rigid and resistant hair shaft through their extensive disulfide bond cross-linking with abundant cysteine residues of hair keratins. The matrix proteins include the high-sulfur and high-glycine-tyrosine keratins. The chain is Keratin-associated protein 19-1 (Krtap19-1) from Mus musculus (Mouse).